A 343-amino-acid polypeptide reads, in one-letter code: tRNA N6-adenosine threonylcarbamoyltransferase (343 aa).

2 residues coordinate Fe cation: histidine 114 and histidine 118. Substrate is bound by residues 137–141, aspartate 171, glycine 184, aspartate 188, and asparagine 278; that span reads LVSGG. Aspartate 306 serves as a coordination point for Fe cation.

It belongs to the KAE1 / TsaD family. The cofactor is Fe(2+).

It localises to the cytoplasm. The enzyme catalyses L-threonylcarbamoyladenylate + adenosine(37) in tRNA = N(6)-L-threonylcarbamoyladenosine(37) in tRNA + AMP + H(+). Its function is as follows. Required for the formation of a threonylcarbamoyl group on adenosine at position 37 (t(6)A37) in tRNAs that read codons beginning with adenine. Is involved in the transfer of the threonylcarbamoyl moiety of threonylcarbamoyl-AMP (TC-AMP) to the N6 group of A37, together with TsaE and TsaB. TsaD likely plays a direct catalytic role in this reaction. The sequence is that of tRNA N6-adenosine threonylcarbamoyltransferase from Acidothermus cellulolyticus (strain ATCC 43068 / DSM 8971 / 11B).